The primary structure comprises 210 residues: Na(+)-translocating NADH-quinone reductase subunit D (210 aa).

5 helical membrane-spanning segments follow: residues 42–62 (FVMT…VSLI), 72–92 (IIVQ…VLKA), 103–123 (VFVG…AFAM), 131–151 (LIDG…VGFF), and 178–198 (NGLM…IWVI).

Belongs to the NqrDE/RnfAE family. In terms of assembly, composed of six subunits; NqrA, NqrB, NqrC, NqrD, NqrE and NqrF.

The protein resides in the cell inner membrane. The catalysed reaction is a ubiquinone + n Na(+)(in) + NADH + H(+) = a ubiquinol + n Na(+)(out) + NAD(+). With respect to regulation, this reaction is tightly coupled to the Na(+) pumping activity and specifically requires Na(+) for activity. Inhibited by korormicin and 2-N-heptyl-4-hydroxyquinoline N-oxide (HQNO). In terms of biological role, NQR complex catalyzes the reduction of ubiquinone-1 to ubiquinol by two successive reactions, coupled with the transport of Na(+) ions from the cytoplasm to the periplasm. NqrA to NqrE are probably involved in the second step, the conversion of ubisemiquinone to ubiquinol. The protein is Na(+)-translocating NADH-quinone reductase subunit D of Vibrio alginolyticus.